A 230-amino-acid polypeptide reads, in one-letter code: MASLGLQLVGYILGLLGLLGTLVAMLLPSWKTSSYVGASIVTAVGFSKGLWMECATHSTGITQCDIYSTLLGLPADIQAAQAMMVTSSAISSLACIISVVGMRCTVFCQESRAKDRVAVAGGVFFILGGLLGFIPVAWNLHGILRDFYSPLVPDSMKFEIGEALYLGIISSLFSLIAGIILCFSCSSQRNRSNYYDAYQAQPLATRSSPRPGQPPKVKSEFNSYSLTGYV.

At 1–7 (MASLGLQ) the chain is on the cytoplasmic side. Residues 8-28 (LVGYILGLLGLLGTLVAMLLP) form a helical membrane-spanning segment. The Extracellular segment spans residues 29 to 81 (SWKTSSYVGASIVTAVGFSKGLWMECATHSTGITQCDIYSTLLGLPADIQAAQ). Cys54 and Cys64 are disulfide-bonded. A helical membrane pass occupies residues 82–102 (AMMVTSSAISSLACIISVVGM). The Cytoplasmic portion of the chain corresponds to 103–116 (RCTVFCQESRAKDR). A helical transmembrane segment spans residues 117–137 (VAVAGGVFFILGGLLGFIPVA). The Extracellular segment spans residues 138–162 (WNLHGILRDFYSPLVPDSMKFEIGE). The chain crosses the membrane as a helical span at residues 163–183 (ALYLGIISSLFSLIAGIILCF). The Cytoplasmic portion of the chain corresponds to 184–230 (SCSSQRNRSNYYDAYQAQPLATRSSPRPGQPPKVKSEFNSYSLTGYV). Residues 205–230 (TRSSPRPGQPPKVKSEFNSYSLTGYV) form a disordered region. Lys218 participates in a covalent cross-link: Glycyl lysine isopeptide (Lys-Gly) (interchain with G-Cter in SUMO). Phosphoserine is present on residues Ser219 and Ser223. Polar residues predominate over residues 220-230 (EFNSYSLTGYV). The segment at 229–230 (YV) is interactions with TJP1, TJP2 and TJP3.

The protein belongs to the claudin family. In terms of assembly, can form homo- and heteropolymers with other claudins to mediate paracellular barrier and channel functions of tight junctions in response to physiological stimuli. Homopolymers interact with CLDN3, but not CLDN1, homopolymers. Directly interacts with TJP1/ZO-1, TJP2/ZO-2 and TJP3/ZO-3. In terms of processing, the disulfide bond is necessary for pore formation, but is not required for correct protein trafficking.

Its subcellular location is the cell junction. It localises to the tight junction. It is found in the cell membrane. The enzyme catalyses Na(+)(in) = Na(+)(out). It carries out the reaction K(+)(in) = K(+)(out). It catalyses the reaction Rb(+)(in) = Rb(+)(out). The catalysed reaction is Li(+)(in) = Li(+)(out). The enzyme catalyses Cs(+)(in) = Cs(+)(out). It carries out the reaction Ca(2+)(in) = Ca(2+)(out). It catalyses the reaction methylamine(out) = methylamine(in). The catalysed reaction is choline(out) = choline(in). The enzyme catalyses H2O(in) = H2O(out). Functionally, forms paracellular channels: polymerizes in tight junction strands with cation- and water-selective channels through the strands, conveying epithelial permeability in a process known as paracellular tight junction permeability. In intestinal epithelium, allows for sodium and water fluxes from the peritoneal side to the lumen of the intestine to regulate nutrient absorption and clear enteric pathogens as part of mucosal immune response. In kidney, allows passive sodium and calcium reabsorption across proximal tubules from the lumen back to the bloodstream. In the hepatobiliary tract, allows paracellular water and cation fluxes in the hepatic perivenous areas and biliary epithelium to generate bile flow and maintain osmotic gradients. The chain is Claudin-2 from Homo sapiens (Human).